The following is a 128-amino-acid chain: Ribosome-binding factor A (128 aa).

It belongs to the RbfA family. In terms of assembly, monomer. Binds 30S ribosomal subunits, but not 50S ribosomal subunits or 70S ribosomes.

The protein localises to the cytoplasm. Its function is as follows. One of several proteins that assist in the late maturation steps of the functional core of the 30S ribosomal subunit. Associates with free 30S ribosomal subunits (but not with 30S subunits that are part of 70S ribosomes or polysomes). Required for efficient processing of 16S rRNA. May interact with the 5'-terminal helix region of 16S rRNA. The chain is Ribosome-binding factor A from Saccharophagus degradans (strain 2-40 / ATCC 43961 / DSM 17024).